The chain runs to 100 residues: Large ribosomal subunit protein uL23 (100 aa).

The protein belongs to the universal ribosomal protein uL23 family. In terms of assembly, part of the 50S ribosomal subunit. Contacts protein L29, and trigger factor when it is bound to the ribosome.

Functionally, one of the early assembly proteins it binds 23S rRNA. One of the proteins that surrounds the polypeptide exit tunnel on the outside of the ribosome. Forms the main docking site for trigger factor binding to the ribosome. The chain is Large ribosomal subunit protein uL23 from Dechloromonas aromatica (strain RCB).